We begin with the raw amino-acid sequence, 185 residues long: Acireductone dioxygenase (185 aa).

Histidine 97, histidine 99, glutamate 103, and histidine 141 together coordinate Fe(2+). Ni(2+) contacts are provided by histidine 97, histidine 99, glutamate 103, and histidine 141.

It belongs to the acireductone dioxygenase (ARD) family. Monomer. Fe(2+) is required as a cofactor. Requires Ni(2+) as cofactor.

The catalysed reaction is 1,2-dihydroxy-5-(methylsulfanyl)pent-1-en-3-one + O2 = 3-(methylsulfanyl)propanoate + CO + formate + 2 H(+). It catalyses the reaction 1,2-dihydroxy-5-(methylsulfanyl)pent-1-en-3-one + O2 = 4-methylsulfanyl-2-oxobutanoate + formate + 2 H(+). It functions in the pathway amino-acid biosynthesis; L-methionine biosynthesis via salvage pathway; L-methionine from S-methyl-5-thio-alpha-D-ribose 1-phosphate: step 5/6. In terms of biological role, catalyzes 2 different reactions between oxygen and the acireductone 1,2-dihydroxy-3-keto-5-methylthiopentene (DHK-MTPene) depending upon the metal bound in the active site. Fe-containing acireductone dioxygenase (Fe-ARD) produces formate and 2-keto-4-methylthiobutyrate (KMTB), the alpha-ketoacid precursor of methionine in the methionine recycle pathway. Ni-containing acireductone dioxygenase (Ni-ARD) produces methylthiopropionate, carbon monoxide and formate, and does not lie on the methionine recycle pathway. This chain is Acireductone dioxygenase, found in Stenotrophomonas maltophilia (strain K279a).